Consider the following 355-residue polypeptide: Histidinol-phosphate aminotransferase (355 aa).

The residue at position 218 (Lys218) is an N6-(pyridoxal phosphate)lysine.

The protein belongs to the class-II pyridoxal-phosphate-dependent aminotransferase family. Histidinol-phosphate aminotransferase subfamily. In terms of assembly, homodimer. Pyridoxal 5'-phosphate is required as a cofactor.

It catalyses the reaction L-histidinol phosphate + 2-oxoglutarate = 3-(imidazol-4-yl)-2-oxopropyl phosphate + L-glutamate. It participates in amino-acid biosynthesis; L-histidine biosynthesis; L-histidine from 5-phospho-alpha-D-ribose 1-diphosphate: step 7/9. The chain is Histidinol-phosphate aminotransferase from Chlorobium limicola (strain DSM 245 / NBRC 103803 / 6330).